The sequence spans 72 residues: Translation initiation factor IF-1 (72 aa).

The S1-like domain maps to 1–72 (MSKEEVLEFS…TKGRITYRYK (72 aa)).

Belongs to the IF-1 family. Component of the 30S ribosomal translation pre-initiation complex which assembles on the 30S ribosome in the order IF-2 and IF-3, IF-1 and N-formylmethionyl-tRNA(fMet); mRNA recruitment can occur at any time during PIC assembly.

It localises to the cytoplasm. In terms of biological role, one of the essential components for the initiation of protein synthesis. Stabilizes the binding of IF-2 and IF-3 on the 30S subunit to which N-formylmethionyl-tRNA(fMet) subsequently binds. Helps modulate mRNA selection, yielding the 30S pre-initiation complex (PIC). Upon addition of the 50S ribosomal subunit IF-1, IF-2 and IF-3 are released leaving the mature 70S translation initiation complex. This is Translation initiation factor IF-1 from Bartonella quintana (strain Toulouse) (Rochalimaea quintana).